We begin with the raw amino-acid sequence, 1836 residues long: U3 small nucleolar RNA-associated protein 10 (1836 aa).

The stretch at 245–283 (EVVGFLLLPSKYETLRNIDVDTRLTAYSIIAVLASIIPI) is one HEAT 1 repeat. The disordered stretch occupies residues 453 to 473 (SNSSVRDSDDVEFDAGEEDNN). Positions 461–473 (DDVEFDAGEEDNN) are enriched in acidic residues. 2 HEAT repeats span residues 585–623 (PLDL…TTTS) and 813–850 (VENR…DQDL). Positions 863–883 (QIPEQGPAKRRRRSSSSTKQA) are disordered. Transmembrane regions (helical) follow at residues 998–1018 (LLLV…HSVM) and 1085–1105 (LFTY…LLFL). HEAT repeat units lie at residues 1333 to 1372 (ESVL…KFGA), 1749 to 1787 (ETLV…KMGE), and 1790 to 1828 (LTYL…NVLG).

It belongs to the HEATR1/UTP10 family. As to quaternary structure, component of the ribosomal small subunit (SSU) processome.

The protein resides in the nucleus. Its subcellular location is the nucleolus. It is found in the membrane. Functionally, involved in nucleolar processing of pre-18S ribosomal RNA. Involved in ribosome biosynthesis. The polypeptide is U3 small nucleolar RNA-associated protein 10 (Scheffersomyces stipitis (strain ATCC 58785 / CBS 6054 / NBRC 10063 / NRRL Y-11545) (Yeast)).